A 353-amino-acid chain; its full sequence is RNA 3'-terminal phosphate cyclase (353 aa).

ATP-binding positions include glutamine 100 and 285–289 (HAADQ). Histidine 311 serves as the catalytic Tele-AMP-histidine intermediate.

This sequence belongs to the RNA 3'-terminal cyclase family. Type 1 subfamily.

Its subcellular location is the cytoplasm. It carries out the reaction a 3'-end 3'-phospho-ribonucleotide-RNA + ATP = a 3'-end 2',3'-cyclophospho-ribonucleotide-RNA + AMP + diphosphate. Catalyzes the conversion of 3'-phosphate to a 2',3'-cyclic phosphodiester at the end of RNA. The mechanism of action of the enzyme occurs in 3 steps: (A) adenylation of the enzyme by ATP; (B) transfer of adenylate to an RNA-N3'P to produce RNA-N3'PP5'A; (C) and attack of the adjacent 2'-hydroxyl on the 3'-phosphorus in the diester linkage to produce the cyclic end product. The biological role of this enzyme is unknown but it is likely to function in some aspects of cellular RNA processing. The chain is RNA 3'-terminal phosphate cyclase from Nitrosospira multiformis (strain ATCC 25196 / NCIMB 11849 / C 71).